The sequence spans 114 residues: Fructose-bisphosphate aldolase 2 (114 aa).

Position 35–38 (35–38 (NIDT)) interacts with dihydroxyacetone phosphate.

The protein belongs to the class II fructose-bisphosphate aldolase family. In terms of assembly, homodimer. Zn(2+) is required as a cofactor.

The enzyme catalyses beta-D-fructose 1,6-bisphosphate = D-glyceraldehyde 3-phosphate + dihydroxyacetone phosphate. It participates in carbohydrate biosynthesis; Calvin cycle. The protein operates within carbohydrate degradation; glycolysis; D-glyceraldehyde 3-phosphate and glycerone phosphate from D-glucose: step 4/4. In terms of biological role, catalyzes the aldol condensation of dihydroxyacetone phosphate (DHAP or glycerone-phosphate) with glyceraldehyde 3-phosphate (G3P) to form fructose 1,6-bisphosphate (FBP) in gluconeogenesis and the reverse reaction in glycolysis. The protein is Fructose-bisphosphate aldolase 2 (cbbA) of Rhodobacter capsulatus (Rhodopseudomonas capsulata).